We begin with the raw amino-acid sequence, 359 residues long: Peptide chain release factor 1 (359 aa).

Q233 is modified (N5-methylglutamine).

Belongs to the prokaryotic/mitochondrial release factor family. Post-translationally, methylated by PrmC. Methylation increases the termination efficiency of RF1.

The protein resides in the cytoplasm. Its function is as follows. Peptide chain release factor 1 directs the termination of translation in response to the peptide chain termination codons UAG and UAA. The protein is Peptide chain release factor 1 of Clostridium acetobutylicum (strain ATCC 824 / DSM 792 / JCM 1419 / IAM 19013 / LMG 5710 / NBRC 13948 / NRRL B-527 / VKM B-1787 / 2291 / W).